Here is a 107-residue protein sequence, read N- to C-terminus: Integration host factor subunit beta (107 aa).

The disordered stretch occupies residues 87-107 (RERVNNGTRKNGGSADAASGG).

This sequence belongs to the bacterial histone-like protein family. In terms of assembly, heterodimer of an alpha and a beta chain.

Functionally, this protein is one of the two subunits of integration host factor, a specific DNA-binding protein that functions in genetic recombination as well as in transcriptional and translational control. The sequence is that of Integration host factor subunit beta from Granulibacter bethesdensis (strain ATCC BAA-1260 / CGDNIH1).